The chain runs to 346 residues: Phenylalanine--tRNA ligase alpha subunit (346 aa).

Position 261 (glutamate 261) interacts with Mg(2+).

It belongs to the class-II aminoacyl-tRNA synthetase family. Phe-tRNA synthetase alpha subunit type 1 subfamily. Tetramer of two alpha and two beta subunits. Mg(2+) is required as a cofactor.

Its subcellular location is the cytoplasm. It carries out the reaction tRNA(Phe) + L-phenylalanine + ATP = L-phenylalanyl-tRNA(Phe) + AMP + diphosphate + H(+). The chain is Phenylalanine--tRNA ligase alpha subunit from Streptococcus agalactiae serotype III (strain NEM316).